The primary structure comprises 227 residues: Extracellular deoxyribonuclease (227 aa).

The N-terminal stretch at 1–20 is a signal peptide; the sequence is MFRPLLSFTLARLVSLPLHA.

The protein belongs to the EndA/NucM nuclease family.

The protein localises to the secreted. The polypeptide is Extracellular deoxyribonuclease (Aeromonas hydrophila).